A 243-amino-acid polypeptide reads, in one-letter code: Ribosomal RNA small subunit methyltransferase G (243 aa).

Residues glycine 79, phenylalanine 84, 130 to 131 (AE), and arginine 150 each bind S-adenosyl-L-methionine. The tract at residues 222 to 243 (KPTPNKYPRKPGIPNKQPLGGA) is disordered.

This sequence belongs to the methyltransferase superfamily. RNA methyltransferase RsmG family.

Its subcellular location is the cytoplasm. Its function is as follows. Specifically methylates the N7 position of a guanine in 16S rRNA. This is Ribosomal RNA small subunit methyltransferase G from Lacticaseibacillus paracasei (strain ATCC 334 / BCRC 17002 / CCUG 31169 / CIP 107868 / KCTC 3260 / NRRL B-441) (Lactobacillus paracasei).